The chain runs to 155 residues: V-type proton ATPase 16 kDa proteolipid subunit c (155 aa).

At 1–10 the chain is on the lumenal side; sequence MSEAKSGPEY. A helical transmembrane segment spans residues 11–33; it reads ASFFAVMGASAAMVFSALGAAYG. At 34 to 55 the chain is on the cytoplasmic side; the sequence is TAKSGTGIAAMSVMRPEMIMKS. The helical transmembrane segment at 56–76 threads the bilayer; sequence IIPVVMAGIIAIYGLVVAVLI. Topologically, residues 77–92 are lumenal; it reads ANSLNDGISLYRSFLQ. The chain crosses the membrane as a helical span at residues 93 to 114; it reads LGAGLSVGLSGLAAGFAIGIVG. Residues 115-131 are Cytoplasmic-facing; the sequence is DAGVRGTAQQPRLFVGM. Residues 132-152 traverse the membrane as a helical segment; sequence ILILIFAEVLGLYGLIVALIL. Over 153–155 the chain is Lumenal; the sequence is STK.

Belongs to the V-ATPase proteolipid subunit family. V-ATPase is a heteromultimeric enzyme made up of two complexes: the ATP-hydrolytic V1 complex and the proton translocation V0 complex. The V1 complex consists of three catalytic AB heterodimers that form a heterohexamer, three peripheral stalks each consisting of EG heterodimers, one central rotor including subunits D and F, and the regulatory subunits C and H. The proton translocation complex V0 consists of the proton transport subunit a, a ring of proteolipid subunits c9c'', rotary subunit d, subunits e and f, and the accessory subunits ATP6AP1/Ac45 and ATP6AP2/PRR. Interacts with the V0 complex V-ATPase subunit a4 ATP6V0A4. Interacts with LASS2. Interacts with RNF182; this interaction leads to ubiquitination and degradation via the proteasome pathway. In terms of processing, ubiquitinated by RNF182, leading to its degradation via the ubiquitin-proteasome pathway.

It localises to the cytoplasmic vesicle. It is found in the clathrin-coated vesicle membrane. The protein localises to the secretory vesicle. Its subcellular location is the synaptic vesicle membrane. Its function is as follows. Proton-conducting pore forming subunit of the V0 complex of vacuolar(H+)-ATPase (V-ATPase), a multisubunit enzyme composed of a peripheral complex (V1) that hydrolyzes ATP and a membrane integral complex (V0) that translocates protons. V-ATPase is responsible for acidifying and maintaining the pH of intracellular compartments and in some cell types, is targeted to the plasma membrane, where it is responsible for acidifying the extracellular environment. This is V-type proton ATPase 16 kDa proteolipid subunit c (ATP6V0C) from Ovis aries (Sheep).